The sequence spans 322 residues: HPr kinase/phosphorylase (322 aa).

Residues histidine 146 and lysine 167 contribute to the active site. ATP is bound at residue 161–168; sequence GDSGLGKS. Position 168 (serine 168) interacts with Mg(2+). The active-site Proton acceptor; for phosphorylation activity. Proton donor; for dephosphorylation activity is aspartate 185. Residues 209 to 218 form an important for the catalytic mechanism of both phosphorylation and dephosphorylation region; it reads LEVRGLGLLD. Residue glutamate 210 participates in Mg(2+) binding. The active site involves arginine 250. Residues 271–276 form an important for the catalytic mechanism of dephosphorylation region; sequence QVAAGR.

This sequence belongs to the HPrK/P family. In terms of assembly, homohexamer. It depends on Mg(2+) as a cofactor.

The enzyme catalyses [HPr protein]-L-serine + ATP = [HPr protein]-O-phospho-L-serine + ADP + H(+). It carries out the reaction [HPr protein]-O-phospho-L-serine + phosphate + H(+) = [HPr protein]-L-serine + diphosphate. In terms of biological role, catalyzes the ATP- as well as the pyrophosphate-dependent phosphorylation of a specific serine residue in HPr, a phosphocarrier protein of the phosphoenolpyruvate-dependent sugar phosphotransferase system (PTS). HprK/P also catalyzes the pyrophosphate-producing, inorganic phosphate-dependent dephosphorylation (phosphorolysis) of seryl-phosphorylated HPr (P-Ser-HPr). The sequence is that of HPr kinase/phosphorylase from Paraburkholderia phymatum (strain DSM 17167 / CIP 108236 / LMG 21445 / STM815) (Burkholderia phymatum).